The chain runs to 600 residues: ATP-dependent lipid A-core flippase (600 aa).

Transmembrane regions (helical) follow at residues Val-26–Leu-46, Leu-82–Leu-102, Val-167–Ile-187, and Pro-266–Leu-286. The ABC transmembrane type-1 domain occupies Leu-30–Lys-321. In terms of domain architecture, ABC transporter spans Leu-353–Met-589. Position 387–394 (Gly-387–Ser-394) interacts with ATP.

It belongs to the ABC transporter superfamily. Lipid exporter (TC 3.A.1.106) family. As to quaternary structure, homodimer.

The protein localises to the cell inner membrane. It carries out the reaction ATP + H2O + lipid A-core oligosaccharideSide 1 = ADP + phosphate + lipid A-core oligosaccharideSide 2.. Functionally, involved in lipopolysaccharide (LPS) biosynthesis. Translocates lipid A-core from the inner to the outer leaflet of the inner membrane. Transmembrane domains (TMD) form a pore in the inner membrane and the ATP-binding domain (NBD) is responsible for energy generation. In Pseudomonas syringae pv. syringae (strain B728a), this protein is ATP-dependent lipid A-core flippase.